A 637-amino-acid polypeptide reads, in one-letter code: Phospholipase B (637 aa).

A signal peptide spans 1 to 19 (MSIATATFAFSLFATIAFA). The PLA2c domain maps to 46-572 (DCPSNVTWIR…DTWCWAGDDN (527 aa)). Residues N50, N56, N122, N231, N246, N272, N314, N343, N387, N433, N481, N501, N528, N553, N572, N594, and N606 are each glycosylated (N-linked (GlcNAc...) asparagine).

Belongs to the lysophospholipase family. N-glycosylated.

It is found in the secreted. The protein resides in the cell membrane. The catalysed reaction is a 1-acyl-sn-glycero-3-phosphocholine + H2O = sn-glycerol 3-phosphocholine + a fatty acid + H(+). Inhibited by Fe(3+) ion. Exhibits phospholipase B (PLB), lysophospholipase (LPL) and lysophospholipase/transacylase (LPTA) activities. This is Phospholipase B (PLB1) from Cryptococcus neoformans var. grubii serotype A (strain H99 / ATCC 208821 / CBS 10515 / FGSC 9487) (Filobasidiella neoformans var. grubii).